A 1049-amino-acid chain; its full sequence is MFEDEPHAEGAAAVAAAREALQALCQELNLDEGSAAEALDDFTAIRGNYSLEGEVIHWLACSLYVACRKSIIPTVGKGVMEGNCVSLTRILRSAKLSLIQFFSKMKKWMDMSNLPQEFRERIERLERNFEVSTVIFKKFEPIFLDIFQNPYEELPKLPRSRKQRRIPCSVKDLFNFCWTLFVYTKGNFRMIGDDLVNSYHLLLCCLDLIFANAIMCPNRRDLLNPSFKGLPSDFHAVNFKAAEEPPCIIAVLCDLHDGLLVEAKGIKEHYFKPYISKLFDKKILKGECLLDLSSFTDNSKAVNKEYEEYVLTVGDFDERIFLGADAEEEIGTPRKFAADTQFGKLTSQASVDCNLQQHFEKKRSFAPSTPLTGRRYLQEKEAVTTPVASATQSVSRLQSIVAGLKSAPSEQLLTIFESCMRNPMGNIVKIVKGIGETFCQHYTQSTDKQPGSHIDFAVNRLKLAEILYYKILETIMVQETRRLHGMDMSVLLEQDIFHRSLLACCLEIVLFAYSSPRTFPWIIDVLGLQPFYFYKVIEVVIRSEEGLSRDMVKHLNSIEEQILESLAWTNNSALWEALRASANKVPSCEEVIFPNNFEIGNGGSVQGHLPMMPMSPIIHPRVKEVRTDSGSLRKDMQPLSPISVHERYSSPAAGSAKRRLFGDDPPKETLMEKIMAEGTQLKIAPSSVTAESLSISPGQALLTMATTTVTGTTGRKVTVPLHGIANDAGEITLVPISMNTTQDSTAESLVSLTAQSLIGASPKQTHLTKTQDAPLTGISKPKRTGSLALFYRKVYHLASVRLRDLCLKLDVSNELRRKIWTCFEFTLVHCPDLMKDRHLDQLLLCAFYIMAKVTKEERTFQEIMKSYRNQPQANSHVYRSVLLKSIPGEVVAYNGDYEMTDGDIEDATKTPNCSSEPVKEERGDLIKFYNAIYVGRVKSFALKYDLSNQDHIMDAPPLSPFPHIKQQPGSPRRISQQHSIYVSPHKNASGLTPRSALLYKFNGSPSKKAKKRVIAISGDAESPAKRLCQENDDVLLKRLQDVVSERANH.

3 positions are modified to phosphothreonine: T332, T369, and T385. Residues 385-584 form a domain A region; that stretch reads TPVASATQSV…WEALRASANK (200 aa). Residues 385–944 form a pocket; binds T and E1A region; that stretch reads TPVASATQSV…GRVKSFALKY (560 aa). The interval 585–779 is spacer; it reads VPSCEEVIFP…TQDAPLTGIS (195 aa). A phosphoserine mark is found at S640, S650, S748, and S761. Positions 780–944 are domain B; that stretch reads KPKRTGSLAL…GRVKSFALKY (165 aa). Phosphoserine occurs at positions 959, 970, and 983. Position 992 is a phosphothreonine (T992). 2 positions are modified to phosphoserine: S1004 and S1022.

It belongs to the retinoblastoma protein (RB) family. In terms of assembly, component of the DREAM complex (also named LINC complex) at least composed of E2F4, E2F5, LIN9, LIN37, LIN52, LIN54, MYBL1, MYBL2, RBL1, RBL2, RBBP4, TFDP1 and TFDP2. The complex exists in quiescent cells where it represses cell cycle-dependent genes. It dissociates in S phase when LIN9, LIN37, LIN52 and LIN54 form a subcomplex that binds to MYBL2. Interacts with AATF. Interacts with KDM5A. Interacts with KMT5B and KMT5C. Interacts with USP4. Interacts with RBBP9. Post-translationally, cell-cycle arrest properties are inactivated by phosphorylation on Thr-332, Ser-640, Ser-959 and Ser-970 by CDK4.

Its subcellular location is the nucleus. Its function is as follows. Key regulator of entry into cell division. Directly involved in heterochromatin formation by maintaining overall chromatin structure and, in particular, that of constitutive heterochromatin by stabilizing histone methylation. Recruits and targets histone methyltransferases KMT5B and KMT5C, leading to epigenetic transcriptional repression. Controls histone H4 'Lys-20' trimethylation. Probably acts as a transcription repressor by recruiting chromatin-modifying enzymes to promoters. Potent inhibitor of E2F-mediated trans-activation. May act as a tumor suppressor. This Rattus norvegicus (Rat) protein is Retinoblastoma-like protein 1.